The chain runs to 229 residues: Adenylate kinase (229 aa).

10 to 15 lines the ATP pocket; it reads GSGKGT. Positions 30–59 are NMP; it reads ESGVIFREHISKGTELGKQAKSYIDKGELV. Residues S31, R36, 57 to 59, 84 to 87, and Q91 each bind AMP; these read ELV and GFPR. Residues 125 to 164 form an LID region; that stretch reads GRRICKTNNNHPNNVSIDSIKPDGNNCRVCHGELIVRTDD. An ATP-binding site is contributed by R126. AMP-binding residues include R161 and R173. N209 is an ATP binding site.

This sequence belongs to the adenylate kinase family. In terms of assembly, monomer.

The protein resides in the cytoplasm. It carries out the reaction AMP + ATP = 2 ADP. The protein operates within purine metabolism; AMP biosynthesis via salvage pathway; AMP from ADP: step 1/1. Its function is as follows. Catalyzes the reversible transfer of the terminal phosphate group between ATP and AMP. Plays an important role in cellular energy homeostasis and in adenine nucleotide metabolism. This Lawsonia intracellularis (strain PHE/MN1-00) protein is Adenylate kinase.